We begin with the raw amino-acid sequence, 365 residues long: Isoflavone 4'-O-methyltransferase (365 aa).

Residues 207–210 (VAGG), aspartate 231, 231–232 (DQ), 251–252 (DM), and lysine 265 contribute to the S-adenosyl-L-methionine site. Histidine 269 (proton acceptor) is an active-site residue.

Belongs to the class I-like SAM-binding methyltransferase superfamily. Cation-independent O-methyltransferase family. COMT subfamily.

It carries out the reaction a 4'-hydroxyisoflavone + S-adenosyl-L-methionine = a 4'-methoxyisoflavone + S-adenosyl-L-homocysteine + H(+). The enzyme catalyses (2R,3S)-2,4',7-trihydroxyisoflavanone + S-adenosyl-L-methionine = (2R,3S)-2,7-dihydroxy-4'-methoxyisoflavanone + S-adenosyl-L-homocysteine + H(+). 2-hydroxyisoflavanone 4'-O-methyltransferase involved in the biosynthesis of formononetin. Can use 2,7,4'-trihydroxyisoflavanone as substrate, but not daidzein. This is Isoflavone 4'-O-methyltransferase (HI4'OMT) from Lotus japonicus (Lotus corniculatus var. japonicus).